The primary structure comprises 690 residues: Iron-sulfur clusters transporter ATM1, mitochondrial (690 aa).

Residues Met1–His26 constitute a mitochondrion transit peptide. Residues Ser27–Arg110 lie on the Mitochondrial matrix side of the membrane. Residues Val111 to Phe132 traverse the membrane as a helical segment. An ABC transmembrane type-1 domain is found at Val111–Gln401. The Mitochondrial intermembrane segment spans residues Lys133–Gly155. A helical membrane pass occupies residues Leu156–Phe179. Residues Ala180–Val228 are Mitochondrial matrix-facing. The helical transmembrane segment at Leu229–Tyr252 threads the bilayer. Position 253 (Gln253) is a topological domain, mitochondrial intermembrane. A helical membrane pass occupies residues Phe254 to Ile274. At Lys275–Ala340 the chain is on the mitochondrial matrix side. Glutathione is bound by residues Arg280–Arg284 and Asn343–Gln346. A helical transmembrane segment spans residues Phe341–Tyr359. The Mitochondrial intermembrane portion of the chain corresponds to Met360 to Asp374. The chain crosses the membrane as a helical span at residues Leu375–Tyr396. Residue Gly393 participates in glutathione binding. Residues Arg397–Leu690 are Mitochondrial matrix-facing. Residues Ile436 to Thr672 enclose the ABC transporter domain. ATP-binding positions include Tyr445 and Gly469–Lys480.

Belongs to the ABC transporter superfamily. ABCB family. Heavy Metal importer (TC 3.A.1.210) subfamily. As to quaternary structure, homodimer.

The protein resides in the mitochondrion inner membrane. In terms of biological role, performs an essential function in the generation of cytoplasmic iron-sulfur proteins by mediating the ATP-dependent export of Fe/S cluster precursors synthesized by NFS1 and other mitochondrial proteins. Hydrolyzes ATP. Binds glutathione and may function by transporting a glutathione-conjugated iron-sulfur compound. The protein is Iron-sulfur clusters transporter ATM1, mitochondrial of Saccharomyces cerevisiae (strain ATCC 204508 / S288c) (Baker's yeast).